The primary structure comprises 366 residues: tRNA/tmRNA (uracil-C(5))-methyltransferase (366 aa).

S-adenosyl-L-methionine contacts are provided by Gln-190, Tyr-218, Asn-223, Glu-239, and Asp-299. The Nucleophile role is filled by Cys-324. Glu-358 functions as the Proton acceptor in the catalytic mechanism.

This sequence belongs to the class I-like SAM-binding methyltransferase superfamily. RNA M5U methyltransferase family. TrmA subfamily.

It catalyses the reaction uridine(54) in tRNA + S-adenosyl-L-methionine = 5-methyluridine(54) in tRNA + S-adenosyl-L-homocysteine + H(+). It carries out the reaction uridine(341) in tmRNA + S-adenosyl-L-methionine = 5-methyluridine(341) in tmRNA + S-adenosyl-L-homocysteine + H(+). In terms of biological role, dual-specificity methyltransferase that catalyzes the formation of 5-methyluridine at position 54 (m5U54) in all tRNAs, and that of position 341 (m5U341) in tmRNA (transfer-mRNA). This is tRNA/tmRNA (uracil-C(5))-methyltransferase from Citrobacter koseri (strain ATCC BAA-895 / CDC 4225-83 / SGSC4696).